The following is a 418-amino-acid chain: S-adenosylmethionine synthase (418 aa).

Position 16 (His16) interacts with ATP. Asp18 provides a ligand contact to Mg(2+). Glu44 serves as a coordination point for K(+). L-methionine contacts are provided by Glu57 and Gln100. The interval 100-110 is flexible loop; it reads QSPDISQGVTK. Residues 175–177, 251–252, Asp260, 266–267, Ala283, and Lys287 contribute to the ATP site; these read DGK, KF, and RK. Residue Asp260 participates in L-methionine binding. Lys291 lines the L-methionine pocket.

It belongs to the AdoMet synthase family. In terms of assembly, homotetramer; dimer of dimers. Mg(2+) is required as a cofactor. K(+) serves as cofactor.

It localises to the cytoplasm. It catalyses the reaction L-methionine + ATP + H2O = S-adenosyl-L-methionine + phosphate + diphosphate. The protein operates within amino-acid biosynthesis; S-adenosyl-L-methionine biosynthesis; S-adenosyl-L-methionine from L-methionine: step 1/1. Catalyzes the formation of S-adenosylmethionine (AdoMet) from methionine and ATP. The overall synthetic reaction is composed of two sequential steps, AdoMet formation and the subsequent tripolyphosphate hydrolysis which occurs prior to release of AdoMet from the enzyme. The chain is S-adenosylmethionine synthase from Gloeothece citriformis (strain PCC 7424) (Cyanothece sp. (strain PCC 7424)).